The primary structure comprises 815 residues: Glycogen phosphorylase (815 aa).

Lys662 carries the post-translational modification N6-(pyridoxal phosphate)lysine.

It belongs to the glycogen phosphorylase family. Pyridoxal 5'-phosphate serves as cofactor.

It catalyses the reaction [(1-&gt;4)-alpha-D-glucosyl](n) + phosphate = [(1-&gt;4)-alpha-D-glucosyl](n-1) + alpha-D-glucose 1-phosphate. Its function is as follows. Phosphorylase is an important allosteric enzyme in carbohydrate metabolism. Enzymes from different sources differ in their regulatory mechanisms and in their natural substrates. However, all known phosphorylases share catalytic and structural properties. The sequence is that of Glycogen phosphorylase (glgP) from Shigella flexneri.